The primary structure comprises 1423 residues: uncharacterized protein (1423 aa).

The first 28 residues, 1 to 28, serve as a signal peptide directing secretion; sequence MTSSVRLAFLATLLLLLPLEAQIQQANS. At 29 to 1321 the chain is on the extracellular side; sequence ANVNQNVGQQ…RSREKQNFLT (1293 aa). Residues Asn94, Asn306, Asn355, Asn483, Asn666, and Asn903 are each glycosylated (N-linked (GlcNAc...) asparagine). Residues 184 to 347 enclose the NIDO domain; it reads SFFGQSASKA…GRYMFRVDDV (164 aa). Residues 638-818 enclose the AMOP domain; sequence VKKKSLEMCH…FRCQMFYWRR (181 aa). Residues 1322 to 1342 form a helical membrane-spanning segment; sequence WLAIIGGIFGVLVFVILIFLC. At 1343–1423 the chain is on the cytoplasmic side; that stretch reads CWIVKQKKKG…EDLHGLKTSV (81 aa). Positions 1364-1401 are disordered; that stretch reads SRSSMTGSRGGKKYPIHESEPLNEKRFDADTYRDDDFY. The segment covering 1378–1401 has biased composition (basic and acidic residues); that stretch reads PIHESEPLNEKRFDADTYRDDDFY.

The protein resides in the membrane. This is an uncharacterized protein from Caenorhabditis elegans.